A 906-amino-acid polypeptide reads, in one-letter code: ATP-dependent DNA helicase DDX11 (906 aa).

The Helicase ATP-binding domain occupies 9–442 (GGIHFPFPFP…KNLMYIKQIL (434 aa)). Residue 44 to 51 (SPTGTGKS) coordinates ATP. Positions 78–111 (APGSGPPSSEKNSLLTSSSCQEPTDTPRPAGEPD) are disordered. Residues 85-96 (SSEKNSLLTSSS) are compositionally biased toward low complexity. Phosphoserine is present on serine 260. Residues cysteine 265 and cysteine 283 each contribute to the [4Fe-4S] cluster site. Positions 284 to 301 (VDMQRSKREKNGTGEDKP) are enriched in basic and acidic residues. Residues 284–310 (VDMQRSKREKNGTGEDKPKRKRQKIQT) form a disordered region. Cysteine 312 and cysteine 347 together coordinate [4Fe-4S] cluster. The short motif at 390–393 (DEAH) is the DEAH box element.

This sequence belongs to the DEAD box helicase family. DEAH subfamily. DDX11/CHL1 sub-subfamily. Associates with the CTF18-RFC complex. Associates with a cohesin complex composed of RAD21, SMC1 proteins and SMC3. Interacts with CHTF18. Interacts with DSCC1. Interacts with FEN1; this interaction is direct and increases flap endonuclease activity of FEN1. Interacts with PCNA. Interacts with POLR1A and UBTF. Interacts with RAD21, SMC1 proteins and SMC3. Interacts with RFC2. Interacts with TIMELESS; this interaction increases recruitment of both proteins onto chromatin in response to replication stress induction by hydroxyurea. [4Fe-4S] cluster is required as a cofactor.

It is found in the nucleus. Its subcellular location is the nucleolus. The protein localises to the cytoplasm. It localises to the cytoskeleton. The protein resides in the spindle pole. It is found in the midbody. Its subcellular location is the microtubule organizing center. The protein localises to the centrosome. It catalyses the reaction Couples ATP hydrolysis with the unwinding of duplex DNA at the replication fork by translocating in the 5'-3' direction. This creates two antiparallel DNA single strands (ssDNA). The leading ssDNA polymer is the template for DNA polymerase III holoenzyme which synthesizes a continuous strand.. The enzyme catalyses ATP + H2O = ADP + phosphate + H(+). In terms of biological role, DNA-dependent ATPase and ATP-dependent DNA helicase that participates in various functions in genomic stability, including DNA replication, DNA repair and heterochromatin organization as well as in ribosomal RNA synthesis. Its double-stranded DNA helicase activity requires either a minimal 5'-single-stranded tail length of approximately 15 nt (flap substrates) or 10 nt length single-stranded gapped DNA substrates of a partial duplex DNA structure for helicase loading and translocation along DNA in a 5' to 3' direction. The helicase activity is capable of displacing duplex regions up to 100 bp, which can be extended up to 500 bp by the replication protein A (RPA) or the cohesion CTF18-replication factor C (Ctf18-RFC) complex activities. Also shows ATPase- and helicase activities on substrates that mimic key DNA intermediates of replication, repair and homologous recombination reactions, including forked duplex, anti-parallel G-quadruplex and three-stranded D-loop DNA molecules. Plays a role in DNA double-strand break (DSB) repair at the DNA replication fork during DNA replication recovery from DNA damage. Recruited with TIMELESS factor upon DNA-replication stress response at DNA replication fork to preserve replication fork progression, and hence ensure DNA replication fidelity. Also cooperates with TIMELESS factor during DNA replication to regulate proper sister chromatid cohesion and mitotic chromosome segregation. Stimulates 5'-single-stranded DNA flap endonuclease activity of FEN1 in an ATP- and helicase-independent manner; and hence it may contribute in Okazaki fragment processing at DNA replication fork during lagging strand DNA synthesis. Its ability to function at DNA replication fork is modulated by its binding to long non-coding RNA (lncRNA) cohesion regulator non-coding RNA DDX11-AS1/CONCR, which is able to increase both DDX11 ATPase activity and binding to DNA replicating regions. Also plays a role in heterochromatin organization. Involved in rRNA transcription activation through binding to active hypomethylated rDNA gene loci by recruiting UBTF and the RNA polymerase Pol I transcriptional machinery. Plays a role in embryonic development and prevention of aneuploidy. Involved in melanoma cell proliferation and survival. Associates with chromatin at DNA replication fork regions. Binds to single- and double-stranded DNAs. The chain is ATP-dependent DNA helicase DDX11 from Mus musculus (Mouse).